Reading from the N-terminus, the 957-residue chain is Glycine dehydrogenase (decarboxylating) (957 aa).

An N6-(pyridoxal phosphate)lysine modification is found at lysine 702.

Belongs to the GcvP family. The glycine cleavage system is composed of four proteins: P, T, L and H. Requires pyridoxal 5'-phosphate as cofactor.

The catalysed reaction is N(6)-[(R)-lipoyl]-L-lysyl-[glycine-cleavage complex H protein] + glycine + H(+) = N(6)-[(R)-S(8)-aminomethyldihydrolipoyl]-L-lysyl-[glycine-cleavage complex H protein] + CO2. The glycine cleavage system catalyzes the degradation of glycine. The P protein binds the alpha-amino group of glycine through its pyridoxal phosphate cofactor; CO(2) is released and the remaining methylamine moiety is then transferred to the lipoamide cofactor of the H protein. The chain is Glycine dehydrogenase (decarboxylating) from Bradyrhizobium sp. (strain ORS 278).